The primary structure comprises 424 residues: MAKFSALCSLALLGLATAQKPVGTETHEKLTTFRCTVAGGCVEKTNYIVLDSITGHRIYQPAAETLDCGARGAAPNVTACPTKEACAENCAMEGRTDYGSQGVSTDGASLRLQILHDGKKVAPRVYLLDETEAKYEMLRLTGNEFAFEVTMDKLPCGMNSALYLSEMEEDGGKSELNPGGAPWGTGYCDAQCYVTPFINGEGNIKGNGACCAEMDIWEANSRATHIAPHPCSKPGLYLCEGDECGSTGVCDKSGCAWNPNRIAQPHYYGNNDTFKVDTLKPMTVVTQFPTDASGKLAAIRRLYVQGGVVIKAETVHKAGLPEVDALTDPFCEAFGSQRYMALGATGGMGDALARGMVLVMSIWWDETGGNMQWLDGIASGSGPCNATEGAPANIPLVEPNPEVTFSNLKWGEIGSTFQGGARRL.

An N-terminal signal peptide occupies residues 1–18 (MAKFSALCSLALLGLATA). Intrachain disulfides connect C35–C41, C68–C90, C80–C86, C156–C384, C188–C211, C192–C210, C231–C250, C239–C244, and C255–C331. A glycan (N-linked (GlcNAc...) asparagine) is linked at N76. The active-site Nucleophile is E213. Residue E218 is the Proton donor of the active site. N-linked (GlcNAc...) asparagine glycans are attached at residues N271 and N385.

The protein belongs to the glycosyl hydrolase 7 (cellulase C) family. In terms of assembly, monomer.

The protein localises to the secreted. The catalysed reaction is Endohydrolysis of (1-&gt;4)-beta-D-glucosidic linkages in cellulose, lichenin and cereal beta-D-glucans.. Functionally, endoglucanase that is involved in the biological conversion of cellulose to glucose. Hydrolyzes internal beta-1,4-glucosidic bonds. The protein is Endoglucanase 1 of Pyricularia oryzae (strain 70-15 / ATCC MYA-4617 / FGSC 8958) (Rice blast fungus).